The primary structure comprises 351 residues: tRNA N6-adenosine threonylcarbamoyltransferase (351 aa).

Fe cation is bound by residues histidine 111 and histidine 115. Residues 134–138 (LVSGG), aspartate 167, glycine 180, and asparagine 276 each bind substrate. Aspartate 304 contacts Fe cation.

Belongs to the KAE1 / TsaD family. Fe(2+) is required as a cofactor.

It localises to the cytoplasm. The enzyme catalyses L-threonylcarbamoyladenylate + adenosine(37) in tRNA = N(6)-L-threonylcarbamoyladenosine(37) in tRNA + AMP + H(+). Functionally, required for the formation of a threonylcarbamoyl group on adenosine at position 37 (t(6)A37) in tRNAs that read codons beginning with adenine. Is involved in the transfer of the threonylcarbamoyl moiety of threonylcarbamoyl-AMP (TC-AMP) to the N6 group of A37, together with TsaE and TsaB. TsaD likely plays a direct catalytic role in this reaction. This chain is tRNA N6-adenosine threonylcarbamoyltransferase, found in Marinobacter nauticus (strain ATCC 700491 / DSM 11845 / VT8) (Marinobacter aquaeolei).